The chain runs to 231 residues: Enolase-phosphatase E1 (231 aa).

Belongs to the HAD-like hydrolase superfamily. MasA/MtnC family. As to quaternary structure, monomer. Requires Mg(2+) as cofactor.

The catalysed reaction is 5-methylsulfanyl-2,3-dioxopentyl phosphate + H2O = 1,2-dihydroxy-5-(methylsulfanyl)pent-1-en-3-one + phosphate. The protein operates within amino-acid biosynthesis; L-methionine biosynthesis via salvage pathway; L-methionine from S-methyl-5-thio-alpha-D-ribose 1-phosphate: step 3/6. It participates in amino-acid biosynthesis; L-methionine biosynthesis via salvage pathway; L-methionine from S-methyl-5-thio-alpha-D-ribose 1-phosphate: step 4/6. In terms of biological role, bifunctional enzyme that catalyzes the enolization of 2,3-diketo-5-methylthiopentyl-1-phosphate (DK-MTP-1-P) into the intermediate 2-hydroxy-3-keto-5-methylthiopentenyl-1-phosphate (HK-MTPenyl-1-P), which is then dephosphorylated to form the acireductone 1,2-dihydroxy-3-keto-5-methylthiopentene (DHK-MTPene). The polypeptide is Enolase-phosphatase E1 (Stenotrophomonas maltophilia (strain R551-3)).